The chain runs to 189 residues: Flavin prenyltransferase UbiX (189 aa).

FMN contacts are provided by residues 10–12 (GAS), S37, 88–91 (SIKT), and R123. Residues Y153 and R169 each contribute to the dimethylallyl phosphate site.

Belongs to the UbiX/PAD1 family.

It carries out the reaction dimethylallyl phosphate + FMNH2 = prenylated FMNH2 + phosphate. Its pathway is cofactor biosynthesis; ubiquinone biosynthesis. Flavin prenyltransferase that catalyzes the synthesis of the prenylated FMN cofactor (prenyl-FMN) for 4-hydroxy-3-polyprenylbenzoic acid decarboxylase UbiD. The prenyltransferase is metal-independent and links a dimethylallyl moiety from dimethylallyl monophosphate (DMAP) to the flavin N5 and C6 atoms of FMN. In Escherichia coli O157:H7, this protein is Flavin prenyltransferase UbiX.